The sequence spans 227 residues: SPbeta prophage-derived uncharacterized membrane protein YomJ (227 aa).

A run of 2 helical transmembrane segments spans residues 16–36 and 131–151; these read LFFLLMDGWRGMGICLIIVGL and GIVAGGLLAGGIGAAIGGLSA.

The protein localises to the cell membrane. The polypeptide is SPbeta prophage-derived uncharacterized membrane protein YomJ (yomJ) (Bacillus subtilis (strain 168)).